The primary structure comprises 206 residues: Large ribosomal subunit protein uL3 (206 aa).

Residues Val-122–Arg-154 form a disordered region.

This sequence belongs to the universal ribosomal protein uL3 family. Part of the 50S ribosomal subunit. Forms a cluster with proteins L14 and L19.

Its function is as follows. One of the primary rRNA binding proteins, it binds directly near the 3'-end of the 23S rRNA, where it nucleates assembly of the 50S subunit. In Leptospira borgpetersenii serovar Hardjo-bovis (strain JB197), this protein is Large ribosomal subunit protein uL3.